The chain runs to 341 residues: Retinol dehydrogenase 10 (341 aa).

A helical; Signal-anchor transmembrane segment spans residues 3–23 (IVVEFFVVTFKVLWAFVLAAA). Residue 40–64 (LITGAGSGLGRLFALEFARRRALLV) participates in NADP(+) binding. S197 contacts substrate. Y210 functions as the Proton acceptor in the catalytic mechanism.

It belongs to the short-chain dehydrogenases/reductases (SDR) family. Detected in retinal pigment epithelium (at protein level). Detected in retina, retinal pigment epithelium, and at lower levels in cornea, liver, kidney, pancreas, lung, brain and skeletal muscle.

It is found in the microsome membrane. The protein resides in the endoplasmic reticulum membrane. It carries out the reaction all-trans-retinol + NADP(+) = all-trans-retinal + NADPH + H(+). Its pathway is cofactor metabolism; retinol metabolism. In terms of biological role, retinol dehydrogenase with a clear preference for NADP. Converts all-trans-retinol to all-trans-retinal. Has no detectable activity towards 11-cis-retinol, 9-cis-retinol and 13-cis-retinol. In Bos taurus (Bovine), this protein is Retinol dehydrogenase 10 (RDH10).